The chain runs to 1006 residues: Serine/threonine-protein phosphatase BSL3 (1006 aa).

The segment at 1 to 67 (MDLDSSMVPE…QQQQQPQVTA (67 aa)) is disordered. 2 stretches are compositionally biased toward low complexity: residues 38-47 (SESESASLTP) and 54-67 (QQQQQQQQQPQVTA). Kelch repeat units lie at residues 138–184 (TSAG…VATA), 242–290 (YLMA…TASA), 295–345 (LLLL…VFVN), 351–398 (SGGA…DAAG), and 419–465 (LIFI…TPPG). 2 disordered regions span residues 454–494 (AAAA…LGSP) and 552–579 (GEVELPDRDRGAEATPSGKPSLSLIKPD). Ser616 is modified (phosphoserine). Residues Asp709, His711, Asp743, and Asn775 each coordinate Mn(2+). Residue His776 is the Proton donor of the active site. The Mn(2+) site is built by His828 and His907. At Ser964 the chain carries Phosphoserine. Residues 982 to 1006 (NVNRPPTPTRGRPQNPNDRGSLAWI) are disordered.

The protein belongs to the PPP phosphatase family. BSU subfamily. It depends on Mn(2+) as a cofactor. In terms of tissue distribution, expressed throughout the plant, with a higher level in younger parts.

It is found in the nucleus. The enzyme catalyses O-phospho-L-seryl-[protein] + H2O = L-seryl-[protein] + phosphate. It carries out the reaction O-phospho-L-threonyl-[protein] + H2O = L-threonyl-[protein] + phosphate. Its function is as follows. Phosphatase involved in elongation process, probably by acting as a regulator of brassinolide signaling. The chain is Serine/threonine-protein phosphatase BSL3 (BSL3) from Arabidopsis thaliana (Mouse-ear cress).